A 308-amino-acid polypeptide reads, in one-letter code: Growth/differentiation factor 15 (308 aa).

Positions 1–29 are cleaved as a signal peptide; it reads MPGQELRTVNGSQMLLVLLVLSWLPHGGA. Residues 30–194 constitute a propeptide that is removed on maturation; it reads LSLAEASRAS…RPQAARGRRR (165 aa). N-linked (GlcNAc...) asparagine glycosylation occurs at Asn-70. The segment at 152 to 177 is disordered; that stretch reads APALHLRLSPPPSQSDQLLAESSSAR. A compositionally biased stretch (polar residues) spans 165–177; that stretch reads QSDQLLAESSSAR. 4 disulfides stabilise this stretch: Cys-203-Cys-210, Cys-211-Cys-274, Cys-240-Cys-305, and Cys-244-Cys-307.

This sequence belongs to the TGF-beta family. As to quaternary structure, homodimer; disulfide-linked. Interacts with GFRAL and RET; ligand of GFRAL, which mediates GDF15 internalization and cellular signaling through interaction with RET via the formation of a 2:2:2 ternary complex composed of GDF15, GFRAL and RET. In terms of tissue distribution, detected in plasma (at protein level). Highly expressed in placenta, with lower levels in prostate and colon and some expression in kidney.

Its subcellular location is the secreted. In terms of biological role, hormone produced in response to various stresses to confer information about those stresses to the brain, and trigger an aversive response, characterized by nausea, vomiting, and/or loss of appetite. The aversive response is both required to reduce continuing exposure to those stresses at the time of exposure and to promote avoidance behavior in the future. Acts by binding to its receptor, GFRAL, activating GFRAL-expressing neurons localized in the area postrema and nucleus tractus solitarius of the brainstem. It then triggers the activation of neurons localized within the parabrachial nucleus and central amygdala, which constitutes part of the 'emergency circuit' that shapes responses to stressful conditions. The GDF15-GFRAL signal induces expression of genes involved in metabolism, such as lipid metabolism in adipose tissues. Required for avoidance behavior in response to food allergens: induced downstream of mast cell activation to promote aversion and minimize harmful effects of exposure to noxious substances. In addition to suppress appetite, also promotes weight loss by enhancing energy expenditure in muscle: acts by increasing calcium futile cycling in muscle. Contributes to the effect of metformin, an anti-diabetic drug, on appetite reduction and weight loss: produced in the kidney in response to metformin treatment, thereby activating the GDF15-GFRAL response, leading to reduced appetite and weight. The contribution of GDF15 to weight loss following metformin treatment is however limited and subject to discussion. Produced in response to anticancer drugs, such as camptothecin or cisplatin, promoting nausea, vomiting and contributing to malnutrition. Overproduced in many cancers, promoting anorexia in cancer (cachexia). Responsible for the risk of nausea and vomiting during pregnancy: high levels of GDF15 during pregnancy, mostly originating from the fetus, are associated with increased nausea and vomiting. Maternal sensitivity to nausea is probably determined by pre-pregnancy exposure to GDF15, women with naturally high level of GDF15 being less susceptible to nausea than women with low levels of GDF15 before pregnancy. Promotes metabolic adaptation in response to systemic inflammation caused by bacterial and viral infections in order to promote tissue tolerance and prevent tissue damage. Required for tissue tolerance in response to myocardial infarction by acting as an inhibitor of leukocyte integring activation, thereby protecting against cardiac rupture. Inhibits growth hormone signaling on hepatocytes. The protein is Growth/differentiation factor 15 of Homo sapiens (Human).